Reading from the N-terminus, the 41-residue chain is Photosystem II reaction center protein Y (41 aa).

Residues 7–25 (VAIVLAPIAVAAGWAAFNI) form a helical membrane-spanning segment.

Belongs to the PsbY family. In terms of assembly, PSII is composed of 1 copy each of membrane proteins PsbA, PsbB, PsbC, PsbD, PsbE, PsbF, PsbH, PsbI, PsbJ, PsbK, PsbL, PsbM, PsbT, PsbX, PsbY, PsbZ, Psb30/Ycf12, peripheral proteins PsbO, CyanoQ (PsbQ), PsbU, PsbV and a large number of cofactors. It forms dimeric complexes.

Its subcellular location is the cellular thylakoid membrane. Loosely associated component of the core of photosystem II (PSII), it is not always seen in crystals. PSII is a light-driven water plastoquinone oxidoreductase, using light energy to abstract electrons from H(2)O, generating a proton gradient subsequently used for ATP formation. This Nostoc sp. (strain PCC 7120 / SAG 25.82 / UTEX 2576) protein is Photosystem II reaction center protein Y.